The sequence spans 99 residues: Aspartyl/glutamyl-tRNA(Asn/Gln) amidotransferase subunit C (99 aa).

The protein belongs to the GatC family. As to quaternary structure, heterotrimer of A, B and C subunits.

The enzyme catalyses L-glutamyl-tRNA(Gln) + L-glutamine + ATP + H2O = L-glutaminyl-tRNA(Gln) + L-glutamate + ADP + phosphate + H(+). It carries out the reaction L-aspartyl-tRNA(Asn) + L-glutamine + ATP + H2O = L-asparaginyl-tRNA(Asn) + L-glutamate + ADP + phosphate + 2 H(+). In terms of biological role, allows the formation of correctly charged Asn-tRNA(Asn) or Gln-tRNA(Gln) through the transamidation of misacylated Asp-tRNA(Asn) or Glu-tRNA(Gln) in organisms which lack either or both of asparaginyl-tRNA or glutaminyl-tRNA synthetases. The reaction takes place in the presence of glutamine and ATP through an activated phospho-Asp-tRNA(Asn) or phospho-Glu-tRNA(Gln). This is Aspartyl/glutamyl-tRNA(Asn/Gln) amidotransferase subunit C from Kineococcus radiotolerans (strain ATCC BAA-149 / DSM 14245 / SRS30216).